A 577-amino-acid chain; its full sequence is Solute carrier family 22 member 16 (577 aa).

Residues 23 to 43 (LYFICAFQNISCGIHYLASVF) traverse the membrane as a helical segment. N-linked (GlcNAc...) asparagine glycans are attached at residues Asn57, Asn65, Asn68, and Asn108. A run of 5 helical transmembrane segments spans residues 152–172 (WLAMLIQPLFMFGVLLGSVTF), 183–203 (VVLWATSSSMFLFGIAAAFAV), 214–234 (FLAMVASGYLVVGFVYVMEFI), 244–264 (VHLHSFFAVGTLLVALTGYLV), and 268–288 (WLYQMILSTVTVPFILCCWVL). 2 N-linked (GlcNAc...) asparagine glycosylation sites follow: Asn345 and Asn352. The next 6 membrane-spanning stretches (helical) occupy residues 359-379 (TLTVWLIWFTGSLGFYSFSLN), 389-409 (LNLFLLGVVEIPAYTFVCIAM), 416-436 (TVLAYSLFCSALACGVVMVIP), 441-461 (ILGVVTAMVGKFAIGAAFGLI), 476-496 (LAVGSGSMVCRLASILAPFSV), and 501-521 (IWIFIPQLFVGTMALLSGVLT). The disordered stretch occupies residues 543–577 (ESENESKSSKLLLTTNNSGLEKTEAITPRDSGLGE). 2 N-linked (GlcNAc...) asparagine glycosylation sites follow: Asn546 and Asn558. Over residues 551 to 560 (SKLLLTTNNS) the composition is skewed to low complexity.

This sequence belongs to the major facilitator (TC 2.A.1) superfamily. Organic cation transporter (TC 2.A.1.19) family. Expressed in testis and epididymis (at protein level). Expressed in endometrium (at protein level); highly expressed during the normal secretory phase, but expression is significantly reduced in the proliferative phase. Expressed at lower levels in adult tissues including bone marrow (at protein level). Expressed in hematopoietic cells, including CD34(+) leukocytes. Expressed in fetal liver (at protein level), brain, lung, kidney, heart, skeletal muscle, spleen and thymus. Expressed in leukemia cells. Abundantly expressed in ovarian cancer clear-cell adenocarcinoma.

Its subcellular location is the cell membrane. It catalyses the reaction (R)-carnitine(in) = (R)-carnitine(out). It carries out the reaction spermidine(in) = spermidine(out). Its function is as follows. Facilitative organic cation transporter that mediates the transport of carnitine as well as the polyamine spermidine. Mediates the partially Na(+)-dependent bidirectional transport of carnitine. May mediate L-carnitine secretion from testis epididymal epithelium into the lumen which is involved in the maturation of spermatozoa. This is Solute carrier family 22 member 16 from Homo sapiens (Human).